Reading from the N-terminus, the 67-residue chain is Large ribosomal subunit protein bL35 (67 aa).

The protein belongs to the bacterial ribosomal protein bL35 family.

In Sphingopyxis alaskensis (strain DSM 13593 / LMG 18877 / RB2256) (Sphingomonas alaskensis), this protein is Large ribosomal subunit protein bL35.